The sequence spans 363 residues: UDP-N-acetylglucosamine--N-acetylmuramyl-(pentapeptide) pyrophosphoryl-undecaprenol N-acetylglucosamine transferase (363 aa).

Residues 12 to 14, asparagine 122, arginine 164, serine 191, isoleucine 245, and glutamine 290 each bind UDP-N-acetyl-alpha-D-glucosamine; that span reads TGG.

This sequence belongs to the glycosyltransferase 28 family. MurG subfamily.

It localises to the cell membrane. The catalysed reaction is di-trans,octa-cis-undecaprenyl diphospho-N-acetyl-alpha-D-muramoyl-L-alanyl-D-glutamyl-meso-2,6-diaminopimeloyl-D-alanyl-D-alanine + UDP-N-acetyl-alpha-D-glucosamine = di-trans,octa-cis-undecaprenyl diphospho-[N-acetyl-alpha-D-glucosaminyl-(1-&gt;4)]-N-acetyl-alpha-D-muramoyl-L-alanyl-D-glutamyl-meso-2,6-diaminopimeloyl-D-alanyl-D-alanine + UDP + H(+). It participates in cell wall biogenesis; peptidoglycan biosynthesis. Functionally, cell wall formation. Catalyzes the transfer of a GlcNAc subunit on undecaprenyl-pyrophosphoryl-MurNAc-pentapeptide (lipid intermediate I) to form undecaprenyl-pyrophosphoryl-MurNAc-(pentapeptide)GlcNAc (lipid intermediate II). The sequence is that of UDP-N-acetylglucosamine--N-acetylmuramyl-(pentapeptide) pyrophosphoryl-undecaprenol N-acetylglucosamine transferase from Lawsonia intracellularis (strain PHE/MN1-00).